The following is a 156-amino-acid chain: Large ribosomal subunit protein eL24 (156 aa).

Residues 87–156 (LELIKERRSQ…AFQKVHATSR (70 aa)) are disordered. Over residues 89-129 (LIKERRSQKPSDRKAARDVKLAKDKEAKKADKAARKAEKAK) the composition is skewed to basic and acidic residues. Residues 130–147 (SAAAGAQSKVSKQQSKGA) show a composition bias toward low complexity.

Belongs to the eukaryotic ribosomal protein eL24 family.

The protein is Large ribosomal subunit protein eL24 (RPL24) of Debaryomyces hansenii (strain ATCC 36239 / CBS 767 / BCRC 21394 / JCM 1990 / NBRC 0083 / IGC 2968) (Yeast).